Consider the following 63-residue polypeptide: Large ribosomal subunit protein bL28 (63 aa).

The protein belongs to the bacterial ribosomal protein bL28 family.

The sequence is that of Large ribosomal subunit protein bL28 from Brachyspira hyodysenteriae (strain ATCC 49526 / WA1).